A 148-amino-acid polypeptide reads, in one-letter code: Small ribosomal subunit protein eS6 (148 aa).

The protein belongs to the eukaryotic ribosomal protein eS6 family.

This is Small ribosomal subunit protein eS6 from Pyrobaculum islandicum (strain DSM 4184 / JCM 9189 / GEO3).